A 451-amino-acid polypeptide reads, in one-letter code: Bifunctional protein GlmU (451 aa).

Residues 1 to 229 (MQRHAIILAA…FDEIIGVNDR (229 aa)) form a pyrophosphorylase region. Residues 8–11 (LAAG), K22, Q72, and 77–78 (GT) contribute to the UDP-N-acetyl-alpha-D-glucosamine site. Residue D102 coordinates Mg(2+). 3 residues coordinate UDP-N-acetyl-alpha-D-glucosamine: G139, E154, and N227. N227 is a binding site for Mg(2+). The linker stretch occupies residues 230–250 (LMLSEAEKALQQRINRYHMEN). Positions 251–451 (GVTIIDPSST…QVNKEGYLKK (201 aa)) are N-acetyltransferase. Positions 332 and 350 each coordinate UDP-N-acetyl-alpha-D-glucosamine. H362 serves as the catalytic Proton acceptor. UDP-N-acetyl-alpha-D-glucosamine-binding residues include Y365 and N376. Residues 385–386 (NY), A422, and R439 each bind acetyl-CoA.

It in the N-terminal section; belongs to the N-acetylglucosamine-1-phosphate uridyltransferase family. In the C-terminal section; belongs to the transferase hexapeptide repeat family. In terms of assembly, homotrimer. The cofactor is Mg(2+).

Its subcellular location is the cytoplasm. It carries out the reaction alpha-D-glucosamine 1-phosphate + acetyl-CoA = N-acetyl-alpha-D-glucosamine 1-phosphate + CoA + H(+). It catalyses the reaction N-acetyl-alpha-D-glucosamine 1-phosphate + UTP + H(+) = UDP-N-acetyl-alpha-D-glucosamine + diphosphate. It participates in nucleotide-sugar biosynthesis; UDP-N-acetyl-alpha-D-glucosamine biosynthesis; N-acetyl-alpha-D-glucosamine 1-phosphate from alpha-D-glucosamine 6-phosphate (route II): step 2/2. It functions in the pathway nucleotide-sugar biosynthesis; UDP-N-acetyl-alpha-D-glucosamine biosynthesis; UDP-N-acetyl-alpha-D-glucosamine from N-acetyl-alpha-D-glucosamine 1-phosphate: step 1/1. The protein operates within bacterial outer membrane biogenesis; LPS lipid A biosynthesis. Its function is as follows. Catalyzes the last two sequential reactions in the de novo biosynthetic pathway for UDP-N-acetylglucosamine (UDP-GlcNAc). The C-terminal domain catalyzes the transfer of acetyl group from acetyl coenzyme A to glucosamine-1-phosphate (GlcN-1-P) to produce N-acetylglucosamine-1-phosphate (GlcNAc-1-P), which is converted into UDP-GlcNAc by the transfer of uridine 5-monophosphate (from uridine 5-triphosphate), a reaction catalyzed by the N-terminal domain. The chain is Bifunctional protein GlmU from Staphylococcus epidermidis (strain ATCC 35984 / DSM 28319 / BCRC 17069 / CCUG 31568 / BM 3577 / RP62A).